The sequence spans 2312 residues: Protein Ycf2 (2312 aa).

3 disordered regions span residues 170–191 (SSQL…GTED), 223–253 (TEIE…EMNN), and 942–1009 (KRKK…KRKE). Over residues 232 to 242 (KGLSGSSSKSR) the composition is skewed to low complexity. Basic and acidic residues-rich tracts occupy residues 243–252 (LFTEGEKEMN) and 950–1007 (KRKE…PEKR). 1439–1446 (GSIGSGRS) lines the ATP pocket. 3 disordered regions span residues 1513–1532 (YEDR…YEPG), 1857–1983 (LVGS…LLRP), and 2050–2166 (PAEE…DGFS). The span at 1863-1963 (TEEEVEGTEE…GEGTEDEEVE (101 aa)) shows a compositional bias: acidic residues. Residues 1964 to 1976 (GTEKDSSQFDNDR) are compositionally biased toward basic and acidic residues. Composition is skewed to acidic residues over residues 2050–2067 (PAEE…EALE) and 2074–2149 (GEEE…ENDS).

The protein belongs to the Ycf2 family.

It localises to the plastid. Its subcellular location is the chloroplast stroma. Probable ATPase of unknown function. Its presence in a non-photosynthetic plant (Epifagus virginiana) and experiments in tobacco indicate that it has an essential function which is probably not related to photosynthesis. The polypeptide is Protein Ycf2 (Oenothera parviflora (Small-flowered evening primrose)).